The chain runs to 118 residues: uncharacterized protein (118 aa).

A run of 2 helical transmembrane segments spans residues 7–27 (VIVK…FIIE) and 34–58 (VFVA…AIIF).

It is found in the membrane. This is an uncharacterized protein from Saccharomyces cerevisiae (strain ATCC 204508 / S288c) (Baker's yeast).